The chain runs to 374 residues: DNA replication and repair protein RecF (374 aa).

30-37 (GPNAQGKS) is an ATP binding site.

Belongs to the RecF family.

It localises to the cytoplasm. In terms of biological role, the RecF protein is involved in DNA metabolism; it is required for DNA replication and normal SOS inducibility. RecF binds preferentially to single-stranded, linear DNA. It also seems to bind ATP. In Acaryochloris marina (strain MBIC 11017), this protein is DNA replication and repair protein RecF.